The sequence spans 148 residues: Large ribosomal subunit protein bL9 (148 aa).

This sequence belongs to the bacterial ribosomal protein bL9 family.

Its function is as follows. Binds to the 23S rRNA. The polypeptide is Large ribosomal subunit protein bL9 (Pelotomaculum thermopropionicum (strain DSM 13744 / JCM 10971 / SI)).